Consider the following 420-residue polypeptide: 20-oxo-5-O-mycaminosyltylactone 23-monooxygenase (420 aa).

The disordered stretch occupies residues 1-28 (MSSSGDARPSQKGILLPAARANDTDEAA). H118, R122, R311, H367, and C369 together coordinate heme.

Belongs to the cytochrome P450 family.

The enzyme catalyses 20-oxo-5-O-beta-D-mycaminosyltylonolide + 2 reduced [2Fe-2S]-[ferredoxin] + O2 + 2 H(+) = 5-O-beta-D-mycaminosyltylonolide + 2 oxidized [2Fe-2S]-[ferredoxin] + H2O. The protein operates within antibiotic biosynthesis; tylosin biosynthesis. Functionally, involved in the biosynthesis of the complex macrolide antibiotic tylosin. Catalyzes the hydroxylation of 20-oxo-5-O-beta-mycaminosyltylactone at the C-23 position to yield 5-O-beta-mycaminosyltylonolide. The sequence is that of 20-oxo-5-O-mycaminosyltylactone 23-monooxygenase from Streptomyces fradiae (Streptomyces roseoflavus).